Here is a 303-residue protein sequence, read N- to C-terminus: MDIEKIKREIEELKRQKNAIIVAHNYQIDEIQEIADFVGDSFYLSKVCAERTEDVIVFCGVHFMAESAKILSPQKKVLLPEIDAGCPLADMITEEDVDSLKEKYPDYSIVCYINSPAAVKAKSDVICTSSNAVKIVRNFPNDKIIFLPDKNLGSFVKKQVPEKDIILWEGFCITHYKIKKEDVLKAKEAHPEALLLVHPECRPEVVELADFVGSTKQIIDFATSSKAKEFIIGTEMGILYSLKKRNPDKKFYILHPGMICPNMKKNTLESVRNALLYDRYEINIEENVVEGARKALLKMLELS.

Residues histidine 24 and serine 41 each contribute to the iminosuccinate site. Cysteine 86 serves as a coordination point for [4Fe-4S] cluster. Iminosuccinate-binding positions include 112–114 (YIN) and serine 129. Cysteine 172 contributes to the [4Fe-4S] cluster binding site. Iminosuccinate contacts are provided by residues 198–200 (HPE) and threonine 215. Cysteine 260 is a [4Fe-4S] cluster binding site.

It belongs to the quinolinate synthase family. Type 2 subfamily. Requires [4Fe-4S] cluster as cofactor.

The protein localises to the cytoplasm. The catalysed reaction is iminosuccinate + dihydroxyacetone phosphate = quinolinate + phosphate + 2 H2O + H(+). Its pathway is cofactor biosynthesis; NAD(+) biosynthesis; quinolinate from iminoaspartate: step 1/1. Its function is as follows. Catalyzes the condensation of iminoaspartate with dihydroxyacetone phosphate to form quinolinate. This is Quinolinate synthase from Caldicellulosiruptor saccharolyticus (strain ATCC 43494 / DSM 8903 / Tp8T 6331).